Here is a 228-residue protein sequence, read N- to C-terminus: Thermonuclease (228 aa).

An N-terminal signal peptide occupies residues 1 to 23 (MTEYLLSAGICMAIVSILLIGMA). Residues 24-60 (ISNVSKGQYAKRFFYFATSCLVLTLVVVSSLSSSANA) constitute a propeptide that is removed on maturation. Over residues 58 to 70 (ANASQTDNGVNRS) the composition is skewed to polar residues. The tract at residues 58-83 (ANASQTDNGVNRSGSEDPTVYSATST) is disordered. D100 contacts Ca(2+). R114 is an active-site residue. Ca(2+) contacts are provided by D119 and T120. Residues E122 and R166 contribute to the active site.

Belongs to the thermonuclease family. Ca(2+) is required as a cofactor.

It localises to the secreted. It carries out the reaction Endonucleolytic cleavage to nucleoside 3'-phosphates and 3'-phosphooligonucleotide end-products.. Its function is as follows. Enzyme that catalyzes the hydrolysis of both DNA and RNA at the 5' position of the phosphodiester bond. The chain is Thermonuclease (nuc) from Staphylococcus aureus (strain COL).